We begin with the raw amino-acid sequence, 259 residues long: 5'-nucleotidase SurE (259 aa).

Positions 15, 16, 46, and 102 each coordinate a divalent metal cation.

It belongs to the SurE nucleotidase family. A divalent metal cation serves as cofactor.

The protein localises to the cytoplasm. The enzyme catalyses a ribonucleoside 5'-phosphate + H2O = a ribonucleoside + phosphate. Nucleotidase that shows phosphatase activity on nucleoside 5'-monophosphates. The polypeptide is 5'-nucleotidase SurE (Chlorobium luteolum (strain DSM 273 / BCRC 81028 / 2530) (Pelodictyon luteolum)).